We begin with the raw amino-acid sequence, 429 residues long: Trigger factor (429 aa).

One can recognise a PPIase FKBP-type domain in the interval 163–248; the sequence is GDFVVIDFVG…IKEIKVKETP (86 aa).

It belongs to the FKBP-type PPIase family. Tig subfamily.

Its subcellular location is the cytoplasm. It carries out the reaction [protein]-peptidylproline (omega=180) = [protein]-peptidylproline (omega=0). Involved in protein export. Acts as a chaperone by maintaining the newly synthesized protein in an open conformation. Functions as a peptidyl-prolyl cis-trans isomerase. The sequence is that of Trigger factor from Halothermothrix orenii (strain H 168 / OCM 544 / DSM 9562).